The sequence spans 450 residues: UDP-N-acetylmuramoylalanine--D-glutamate ligase (450 aa).

112–118 (GSNGKTT) contacts ATP.

It belongs to the MurCDEF family.

The protein resides in the cytoplasm. It carries out the reaction UDP-N-acetyl-alpha-D-muramoyl-L-alanine + D-glutamate + ATP = UDP-N-acetyl-alpha-D-muramoyl-L-alanyl-D-glutamate + ADP + phosphate + H(+). Its pathway is cell wall biogenesis; peptidoglycan biosynthesis. Cell wall formation. Catalyzes the addition of glutamate to the nucleotide precursor UDP-N-acetylmuramoyl-L-alanine (UMA). This chain is UDP-N-acetylmuramoylalanine--D-glutamate ligase, found in Cytophaga hutchinsonii (strain ATCC 33406 / DSM 1761 / CIP 103989 / NBRC 15051 / NCIMB 9469 / D465).